A 209-amino-acid chain; its full sequence is Large ribosomal subunit protein uL3 (209 aa).

The interval 128–154 (QQRGPMTHGSKFHRAPGSMGASSDPSR) is disordered.

The protein belongs to the universal ribosomal protein uL3 family. As to quaternary structure, part of the 50S ribosomal subunit. Forms a cluster with proteins L14 and L19.

One of the primary rRNA binding proteins, it binds directly near the 3'-end of the 23S rRNA, where it nucleates assembly of the 50S subunit. The sequence is that of Large ribosomal subunit protein uL3 from Clostridium beijerinckii (strain ATCC 51743 / NCIMB 8052) (Clostridium acetobutylicum).